The primary structure comprises 341 residues: tRNA N6-adenosine threonylcarbamoyltransferase (341 aa).

Fe cation contacts are provided by His-111 and His-115. Residues 134–138 (LVSGG), Asp-167, Gly-180, and Asn-274 contribute to the substrate site. Fe cation is bound at residue Asp-302.

The protein belongs to the KAE1 / TsaD family. The cofactor is Fe(2+).

The protein localises to the cytoplasm. It catalyses the reaction L-threonylcarbamoyladenylate + adenosine(37) in tRNA = N(6)-L-threonylcarbamoyladenosine(37) in tRNA + AMP + H(+). In terms of biological role, required for the formation of a threonylcarbamoyl group on adenosine at position 37 (t(6)A37) in tRNAs that read codons beginning with adenine. Is involved in the transfer of the threonylcarbamoyl moiety of threonylcarbamoyl-AMP (TC-AMP) to the N6 group of A37, together with TsaE and TsaB. TsaD likely plays a direct catalytic role in this reaction. The chain is tRNA N6-adenosine threonylcarbamoyltransferase from Paraburkholderia phymatum (strain DSM 17167 / CIP 108236 / LMG 21445 / STM815) (Burkholderia phymatum).